The primary structure comprises 349 residues: Small ribosomal subunit biogenesis GTPase RsgA (349 aa).

Basic residues predominate over residues 1–11 (MSKKKLSKGQQ). Residues 1 to 35 (MSKKKLSKGQQRRVSANHQRRLKHADSKVEWDDSQ) form a disordered region. The 162-residue stretch at 111–272 (YDGLKPIAAN…VIDSPGVREF (162 aa)) folds into the CP-type G domain. Residues 158 to 161 (NKID) and 212 to 220 (GQSGVGKSS) each bind GTP. Cys296, Cys301, His303, and Cys309 together coordinate Zn(2+).

It belongs to the TRAFAC class YlqF/YawG GTPase family. RsgA subfamily. In terms of assembly, monomer. Associates with 30S ribosomal subunit, binds 16S rRNA. Zn(2+) serves as cofactor.

Its subcellular location is the cytoplasm. In terms of biological role, one of several proteins that assist in the late maturation steps of the functional core of the 30S ribosomal subunit. Helps release RbfA from mature subunits. May play a role in the assembly of ribosomal proteins into the subunit. Circularly permuted GTPase that catalyzes slow GTP hydrolysis, GTPase activity is stimulated by the 30S ribosomal subunit. The polypeptide is Small ribosomal subunit biogenesis GTPase RsgA (Dickeya dadantii (strain 3937) (Erwinia chrysanthemi (strain 3937))).